We begin with the raw amino-acid sequence, 294 residues long: Cytidine deaminase (294 aa).

CMP/dCMP-type deaminase domains are found at residues 48–168 and 186–294; these read DEDA…FGPK and LTGD…VLLG. 89–91 serves as a coordination point for substrate; sequence NME. Residue H102 coordinates Zn(2+). E104 acts as the Proton donor in catalysis. C129 and C132 together coordinate Zn(2+).

It belongs to the cytidine and deoxycytidylate deaminase family. As to quaternary structure, homodimer. Zn(2+) serves as cofactor.

It catalyses the reaction cytidine + H2O + H(+) = uridine + NH4(+). The enzyme catalyses 2'-deoxycytidine + H2O + H(+) = 2'-deoxyuridine + NH4(+). In terms of biological role, this enzyme scavenges exogenous and endogenous cytidine and 2'-deoxycytidine for UMP synthesis. This Escherichia fergusonii (strain ATCC 35469 / DSM 13698 / CCUG 18766 / IAM 14443 / JCM 21226 / LMG 7866 / NBRC 102419 / NCTC 12128 / CDC 0568-73) protein is Cytidine deaminase.